We begin with the raw amino-acid sequence, 368 residues long: MLKEFEIEPLLKDKAPHQTKAIVAMSGGVDSSVAAALLYNLGYEVIGVTLQLYGSDGNARKGACCAGQDIYDAKYVAESVGFPHYILNYEEIFKKEVIEDFANTYMRGETPIPCVRCNQTVKFRDLLQVTKNLGADVLVTGHYVRRLEENGEVKLCRSIDKSKDQSYFLFATTEEQLKLLRFPLGGFYKSDIRKLAKYFGLQISEKPDSQDICFVSESYSKTIAKLAPQSVQKGKIVDIHGKVLGEHSGIVNFTVGQRRGLCIAHNEPLYVIKINTENNEVVVGPINALMQKKILVKELNWLEQPKEGMEVTVKLRSSHAGSSATIYSTDEKNKACVILNDDYFGISPGQACVAYKGEQVIGGGWICS.

Residues 24–31 and L50 each bind ATP; that span reads AMSGGVDS. The Nucleophile role is filled by C117. C117 and C213 are disulfide-bonded. G141 contributes to the ATP binding site. The segment at 163 to 165 is interaction with tRNA; it reads KDQ. C213 serves as the catalytic Cysteine persulfide intermediate.

It belongs to the MnmA/TRMU family.

It localises to the cytoplasm. The enzyme catalyses S-sulfanyl-L-cysteinyl-[protein] + uridine(34) in tRNA + AH2 + ATP = 2-thiouridine(34) in tRNA + L-cysteinyl-[protein] + A + AMP + diphosphate + H(+). Catalyzes the 2-thiolation of uridine at the wobble position (U34) of tRNA, leading to the formation of s(2)U34. The protein is tRNA-specific 2-thiouridylase MnmA of Wolbachia pipientis subsp. Culex pipiens (strain wPip).